A 283-amino-acid chain; its full sequence is MSTYLIGDVHGCYDELVALLQQVEFTPGQDTLWLTGDLVARGPGSLEVLRYVRSLGDSVRMVLGNHDLHLLAVFAGISRNKPKDRVTPLLEAPDADELINWLRRQPLLQVDEDKKLVMAHAGITPQWDLPTAQACARDVEAVLASDSYPLFLDAMYGDMPNNWSPELTGLARLRFISNAFTRMRYCFPNGQLDMYCKESPESAPAPLKPWFAIPGPVAQEYAIVFGHWASLEGKGTPENIYALDTGCCWGGTLTCLRWEDKAVFTQHSNRQADSDDDKAAIAS.

The protein belongs to the Ap4A hydrolase family.

It carries out the reaction P(1),P(4)-bis(5'-adenosyl) tetraphosphate + H2O = 2 ADP + 2 H(+). In terms of biological role, hydrolyzes diadenosine 5',5'''-P1,P4-tetraphosphate to yield ADP. The sequence is that of Bis(5'-nucleosyl)-tetraphosphatase, symmetrical from Cronobacter sakazakii (strain ATCC BAA-894) (Enterobacter sakazakii).